A 273-amino-acid chain; its full sequence is Dermonecrotic toxin LspaSicTox-alphaIA1iii (273 aa).

His-5 is an active-site residue. Mg(2+) is bound by residues Glu-25 and Asp-27. His-41 functions as the Nucleophile in the catalytic mechanism. Cystine bridges form between Cys-45–Cys-51 and Cys-47–Cys-190. Asp-85 is a Mg(2+) binding site.

This sequence belongs to the arthropod phospholipase D family. Class II subfamily. It depends on Mg(2+) as a cofactor. As to expression, expressed by the venom gland.

The protein resides in the secreted. It carries out the reaction an N-(acyl)-sphingosylphosphocholine = an N-(acyl)-sphingosyl-1,3-cyclic phosphate + choline. It catalyses the reaction an N-(acyl)-sphingosylphosphoethanolamine = an N-(acyl)-sphingosyl-1,3-cyclic phosphate + ethanolamine. The enzyme catalyses a 1-acyl-sn-glycero-3-phosphocholine = a 1-acyl-sn-glycero-2,3-cyclic phosphate + choline. The catalysed reaction is a 1-acyl-sn-glycero-3-phosphoethanolamine = a 1-acyl-sn-glycero-2,3-cyclic phosphate + ethanolamine. Its function is as follows. Dermonecrotic toxins cleave the phosphodiester linkage between the phosphate and headgroup of certain phospholipids (sphingolipid and lysolipid substrates), forming an alcohol (often choline) and a cyclic phosphate. This toxin acts on sphingomyelin (SM). It may also act on ceramide phosphoethanolamine (CPE), lysophosphatidylcholine (LPC) and lysophosphatidylethanolamine (LPE), but not on lysophosphatidylserine (LPS), and lysophosphatidylglycerol (LPG). It acts by transphosphatidylation, releasing exclusively cyclic phosphate products as second products. Induces dermonecrosis, hemolysis, increased vascular permeability, edema, inflammatory response, and platelet aggregation. The sequence is that of Dermonecrotic toxin LspaSicTox-alphaIA1iii from Loxosceles spadicea (Recluse spider).